Reading from the N-terminus, the 56-residue chain is Large ribosomal subunit protein bL32 (56 aa).

The segment at M1 to E35 is disordered.

This sequence belongs to the bacterial ribosomal protein bL32 family.

This Proteus mirabilis (strain HI4320) protein is Large ribosomal subunit protein bL32.